The sequence spans 432 residues: Alcohol acyltransferase 9 (432 aa).

Residues His-156 and Asp-379 each act as proton acceptor in the active site.

Belongs to the plant acyltransferase family. In terms of tissue distribution, expressed in fruit.

It catalyses the reaction 2-(methylsulfanyl)acetyl-CoA + butan-1-ol = butyl 2-(methylsulfanyl)acetate + CoA. The catalysed reaction is ethanol + acetyl-CoA = ethyl acetate + CoA. It carries out the reaction butan-1-ol + acetyl-CoA = butyl acetate + CoA. The enzyme catalyses butan-1-ol + propanoyl-CoA = butyl propanoate + CoA. Functionally, involved in the biosynthesis of volatile esters which confer kiwifruit flavor. Alcohol acyl transferase that can use a wide range of alcohols as substrate to produce esters. Exhibits acetyl-CoA:alcohol O-acyltransferase activity. The polypeptide is Alcohol acyltransferase 9 (Actinidia eriantha (Velvet vine)).